Consider the following 420-residue polypeptide: Putative phosphate permease HI_1604 (420 aa).

Helical transmembrane passes span 8-28, 49-69, 88-108, 112-132, 145-165, 185-205, 216-236, 250-270, 300-320, 343-363, 370-390, and 393-413; these read GSWLVWITAVFGFFMAFGIGA, AIIIALIFESAGAYLAGGEVT, ILALGMLSTLFASGAWLFIAT, WPVSGTHTIIGAIIGFACITI, IVGSWFVTPVIAGILAYAIFA, GPYYMGITVFVLCIVTMKKGL, ETLIISLAISLIGMFFFHFYF, FGAVEKVFSILMLLTACAMAF, GGALTWWILPLGALGIAVGLI, FAAQFATAMTVVVASGTGLPI, VGAILGIGFARGIAALNLTVI, and IISSWIVTLPAGAFFAIIIFY.

It belongs to the inorganic phosphate transporter (PiT) (TC 2.A.20) family.

It localises to the cell inner membrane. Potential transporter for phosphate. This is Putative phosphate permease HI_1604 from Haemophilus influenzae (strain ATCC 51907 / DSM 11121 / KW20 / Rd).